The following is a 308-amino-acid chain: Ectoine dioxygenase (308 aa).

Residue Gln131 coordinates L-ectoine. 2-oxoglutarate is bound at residue Lys137. Positions 148, 150, and 249 each coordinate Fe cation.

This sequence belongs to the PhyH family. EctD subfamily. As to quaternary structure, homodimer. Requires Fe(2+) as cofactor.

It catalyses the reaction L-ectoine + 2-oxoglutarate + O2 = 5-hydroxyectoine + succinate + CO2. Involved in the biosynthesis of 5-hydroxyectoine, called compatible solute, which helps organisms to survive extreme osmotic stress by acting as a highly soluble organic osmolyte. Catalyzes the 2-oxoglutarate-dependent selective hydroxylation of L-ectoine to yield (4S,5S)-5-hydroxyectoine. The polypeptide is Ectoine dioxygenase (Bordetella bronchiseptica (strain ATCC BAA-588 / NCTC 13252 / RB50) (Alcaligenes bronchisepticus)).